Reading from the N-terminus, the 92-residue chain is uncharacterized protein (92 aa).

The disordered stretch occupies residues Ala-25–Gly-53.

This is an uncharacterized protein from Treponema pallidum (strain Nichols).